A 33-amino-acid polypeptide reads, in one-letter code: Putative makorin-5 (33 aa).

This Homo sapiens (Human) protein is Putative makorin-5 (MKRN9P).